Reading from the N-terminus, the 396-residue chain is Aspartic protease 1 (396 aa).

The first 15 residues, 1–15, serve as a signal peptide directing secretion; it reads MQTFVLLALVAACSA. Positions 68–389 constitute a Peptidase A1 domain; sequence YLGNITLGTP…DIGNGQIGFA (322 aa). Asn71 carries N-linked (GlcNAc...) asparagine glycosylation. Asp86 is an active-site residue. A disulfide bond links Cys99 and Cys104. Residue Asp278 is part of the active site. A disulfide bridge links Cys313 with Cys349.

It belongs to the peptidase A1 family. As to quaternary structure, interacts with B.thuringiensis endotoxin Cry6Aa; the interaction prevents Cry6Aa proteolysis by host gut proteases.

It is found in the cytoplasm. It localises to the lysosome. The protein resides in the secreted. Functionally, aspartic protease, which is part of the necrosis cell death pathway. Promotes B.thuringiensis Cry6Aa stability by preventing its proteolysis by host gut proteases. Required for Cry6Aa-induced necrotic death of intestinal cells. Cry6Aa uptake into the host intestinal cells triggers an increase in intracellular Ca(2+) levels leading to lysosome rupture and to the subsequent release of asp-1 which leads to necrosis. In Caenorhabditis elegans, this protein is Aspartic protease 1.